Reading from the N-terminus, the 279-residue chain is Oxygen-dependent coproporphyrinogen-III oxidase (279 aa).

Serine 102 is a binding site for substrate. Residues histidine 106 and histidine 116 each contribute to the a divalent metal cation site. Histidine 116 (proton donor) is an active-site residue. Position 118–120 (asparagine 118–arginine 120) interacts with substrate. Residues histidine 149 and histidine 179 each contribute to the a divalent metal cation site. Positions tyrosine 244–alanine 279 are important for dimerization.

The protein belongs to the aerobic coproporphyrinogen-III oxidase family. In terms of assembly, homodimer. Requires a divalent metal cation as cofactor.

It is found in the cytoplasm. It catalyses the reaction coproporphyrinogen III + O2 + 2 H(+) = protoporphyrinogen IX + 2 CO2 + 2 H2O. It participates in porphyrin-containing compound metabolism; protoporphyrin-IX biosynthesis; protoporphyrinogen-IX from coproporphyrinogen-III (O2 route): step 1/1. In terms of biological role, involved in the heme biosynthesis. Catalyzes the aerobic oxidative decarboxylation of propionate groups of rings A and B of coproporphyrinogen-III to yield the vinyl groups in protoporphyrinogen-IX. The polypeptide is Oxygen-dependent coproporphyrinogen-III oxidase (Rickettsia bellii (strain RML369-C)).